We begin with the raw amino-acid sequence, 571 residues long: Dual specificity testis-specific protein kinase 2 (571 aa).

The Protein kinase domain occupies 58–313 (DFTCEKIGSG…EIGKTLEEIL (256 aa)). Residues 64–72 (IGSGFFSEV) and K87 each bind ATP. D176 serves as the catalytic Proton acceptor. S219 is modified (phosphoserine; by autocatalysis). A phosphoserine mark is found at S369, S456, and S460. Positions 521–571 (ENGFGSRPQGTSPCPAGASEEMEVEERPAGSTPATFSTSGIGLQTQGKQDG) are disordered. A compositionally biased stretch (polar residues) spans 552–571 (TPATFSTSGIGLQTQGKQDG).

Belongs to the protein kinase superfamily. TKL Ser/Thr protein kinase family. Mg(2+) serves as cofactor. It depends on Mn(2+) as a cofactor. As to expression, predominantly expressed in testis and prostate. Found predominantly in non-germinal Sertoli cells.

The protein localises to the nucleus. The enzyme catalyses L-seryl-[protein] + ATP = O-phospho-L-seryl-[protein] + ADP + H(+). It carries out the reaction L-threonyl-[protein] + ATP = O-phospho-L-threonyl-[protein] + ADP + H(+). The catalysed reaction is L-tyrosyl-[protein] + ATP = O-phospho-L-tyrosyl-[protein] + ADP + H(+). Activated by autophosphorylation on Ser-219. Dual specificity protein kinase activity catalyzing autophosphorylation and phosphorylation of exogenous substrates on both serine/threonine and tyrosine residues. Phosphorylates cofilin at 'Ser-3'. May play an important role in spermatogenesis. The polypeptide is Dual specificity testis-specific protein kinase 2 (TESK2) (Homo sapiens (Human)).